Consider the following 473-residue polypeptide: MKVNEENNKPTKTHVLIFPFPAQGHMIPLLDFTHRLALRGGAALKITVLVTPKNLPFLSPLLSAVVNIEPLILPFPSHPSIPSGVENVQDLPPSGFPLMIHALGNLHAPLISWITSHPSPPVAIVSDFFLGWTKNLGIPRFDFSPSAAITCCILNTLWIEMPTKINEDDDNEILHFPKIPNCPKYRFDQISSLYRSYVHGDPAWEFIRDSFRDNVASWGLVVNSFTAMEGVYLEHLKREMGHDRVWAVGPIIPLSGDNRGGPTSVSVDHVMSWLDAREDNHVVYVCFGSQVVLTKEQTLALASGLEKSGVHFIWAVKEPVEKDSTRGNILDGFDDRVAGRGLVIRGWAPQVAVLRHRAVGAFLTHCGWNSVVEAVVAGVLMLTWPMRADQYTDASLVVDELKVGVRACEGPDTVPDPDELARVFADSVTGNQTERIKAVELRKAALDAIQERGSSVNDLDGFIQHVVSLGLNK.

H25 functions as the Proton acceptor in the catalytic mechanism. H25 serves as a coordination point for an anthocyanidin. D127 serves as the catalytic Charge relay. UDP-alpha-D-glucose contacts are provided by A348, Q350, H365, W368, N369, S370, and E373. Residue A388 coordinates an anthocyanidin. Residues D389 and Q390 each contribute to the UDP-alpha-D-glucose site.

The protein belongs to the UDP-glycosyltransferase family.

It catalyses the reaction a flavonol + UDP-alpha-D-glucose = a flavonol 3-O-beta-D-glucoside + UDP + H(+). The catalysed reaction is a 7-O-hydroxy-flavonol + UDP-alpha-D-glucose = a flavonol 7-O-beta-D-glucoside + UDP + H(+). Possesses quercetin 3-O-glucosyltransferase, 7-O-glucosyltransferase and 4'-O-glucosyltransferase activities in vitro. Also active in vitro on benzoates and benzoate derivatives. The protein is Flavonol 3-O-glucosyltransferase UGT89B1 of Arabidopsis thaliana (Mouse-ear cress).